The following is a 171-amino-acid chain: Adenine phosphoribosyltransferase (171 aa).

It belongs to the purine/pyrimidine phosphoribosyltransferase family. In terms of assembly, homodimer.

It is found in the cytoplasm. It carries out the reaction AMP + diphosphate = 5-phospho-alpha-D-ribose 1-diphosphate + adenine. It functions in the pathway purine metabolism; AMP biosynthesis via salvage pathway; AMP from adenine: step 1/1. Functionally, catalyzes a salvage reaction resulting in the formation of AMP, that is energically less costly than de novo synthesis. This chain is Adenine phosphoribosyltransferase, found in Trichlorobacter lovleyi (strain ATCC BAA-1151 / DSM 17278 / SZ) (Geobacter lovleyi).